The following is a 785-amino-acid chain: Copal-8-ol diphosphate hydratase TPSSA3, chloroplastic (785 aa).

R240 is a binding site for substrate. Mg(2+) contacts are provided by D372 and D374. The DXDD motif signature appears at 372–375; sequence DIDD. R459 is a substrate binding site.

The protein belongs to the terpene synthase family. Mg(2+) is required as a cofactor.

It is found in the plastid. It localises to the chloroplast. It catalyses the reaction (2E,6E,10E)-geranylgeranyl diphosphate + H2O = 8-hydroxycopalyl diphosphate. Its pathway is secondary metabolite biosynthesis; terpenoid biosynthesis. In terms of biological role, involved in the biosynthesis of labdane-type diterpenoid including sclareol, a diterpene-diol that is used as fragrance and flavoring, and has anticancer effects (able to kill leukemic and colon cancer cells by apoptosis). Sclareol can also be used as synthesis precursor of ambergris substitution fragance products such as ambrox. Terpene synthase that produces 8-hydroxycopalyl diphosphate from geranylgeranyl diphosphate (GGPP). The sequence is that of Copal-8-ol diphosphate hydratase TPSSA3, chloroplastic from Salvia sclarea (Clary sage).